We begin with the raw amino-acid sequence, 115 residues long: Cell division protein FtsL (115 aa).

At 1–25 the chain is on the cytoplasmic side; it reads MNTATRVIVAQNVRTRNRTFQITKQ. Residues 26–46 form a helical membrane-spanning segment; it reads GVVIVALVIALLCSAFGVVYF. The Periplasmic segment spans residues 47-115; sequence KDLNRRLFIQ…ILVNADAMIE (69 aa).

Belongs to the FtsL family. Part of a complex composed of FtsB, FtsL and FtsQ.

Its subcellular location is the cell inner membrane. Functionally, essential cell division protein. May link together the upstream cell division proteins, which are predominantly cytoplasmic, with the downstream cell division proteins, which are predominantly periplasmic. This is Cell division protein FtsL from Coxiella burnetii (strain RSA 493 / Nine Mile phase I).